The following is a 411-amino-acid chain: Citrate synthase (411 aa).

Residues H304 and D363 contribute to the active site.

The protein belongs to the citrate synthase family.

It carries out the reaction oxaloacetate + acetyl-CoA + H2O = citrate + CoA + H(+). Its pathway is carbohydrate metabolism; tricarboxylic acid cycle; isocitrate from oxaloacetate: step 1/2. This chain is Citrate synthase (gltA), found in Rickettsia canadensis.